The sequence spans 205 residues: uncharacterized protein (205 aa).

The 139-residue stretch at 51–189 (ANVDAVAILA…KKGFAIDVRL (139 aa)) folds into the Nudix hydrolase domain. Positions 90–111 (GLVDSKESCEDAAIRELREETG) match the Nudix box motif.

It belongs to the Nudix hydrolase family.

The protein resides in the cytoplasm. The protein localises to the nucleus. This is an uncharacterized protein from Schizosaccharomyces pombe (strain 972 / ATCC 24843) (Fission yeast).